The chain runs to 240 residues: tRNA pseudouridine synthase B (240 aa).

Asp-54 functions as the Nucleophile in the catalytic mechanism.

This sequence belongs to the pseudouridine synthase TruB family. Type 1 subfamily.

The enzyme catalyses uridine(55) in tRNA = pseudouridine(55) in tRNA. Its function is as follows. Responsible for synthesis of pseudouridine from uracil-55 in the psi GC loop of transfer RNAs. The sequence is that of tRNA pseudouridine synthase B from Chlorobaculum tepidum (strain ATCC 49652 / DSM 12025 / NBRC 103806 / TLS) (Chlorobium tepidum).